We begin with the raw amino-acid sequence, 140 residues long: Nucleoside diphosphate kinase (140 aa).

ATP-binding residues include Lys-11, Phe-59, Arg-87, Thr-93, Arg-104, and Asn-114. His-117 serves as the catalytic Pros-phosphohistidine intermediate.

This sequence belongs to the NDK family. Homotetramer. Mg(2+) serves as cofactor.

It localises to the cytoplasm. The catalysed reaction is a 2'-deoxyribonucleoside 5'-diphosphate + ATP = a 2'-deoxyribonucleoside 5'-triphosphate + ADP. It catalyses the reaction a ribonucleoside 5'-diphosphate + ATP = a ribonucleoside 5'-triphosphate + ADP. Functionally, major role in the synthesis of nucleoside triphosphates other than ATP. The ATP gamma phosphate is transferred to the NDP beta phosphate via a ping-pong mechanism, using a phosphorylated active-site intermediate. The chain is Nucleoside diphosphate kinase from Rhodopseudomonas palustris (strain BisB5).